The chain runs to 141 residues: Large ribosomal subunit protein uL11 (141 aa).

The protein belongs to the universal ribosomal protein uL11 family. As to quaternary structure, part of the ribosomal stalk of the 50S ribosomal subunit. Interacts with L10 and the large rRNA to form the base of the stalk. L10 forms an elongated spine to which L12 dimers bind in a sequential fashion forming a multimeric L10(L12)X complex. Post-translationally, one or more lysine residues are methylated.

Forms part of the ribosomal stalk which helps the ribosome interact with GTP-bound translation factors. This chain is Large ribosomal subunit protein uL11, found in Streptococcus sanguinis (strain SK36).